The following is a 682-amino-acid chain: Activating transcription factor 7-interacting protein 2 (682 aa).

The disordered stretch occupies residues 120-148 (SRTTESPSRVFTEEAKDSLNTSENDSEHQ). Positions 137-148 (SLNTSENDSEHQ) are enriched in polar residues. The stretch at 328–378 (EIYSINYELFDKKLKELNQRIGKTECRNKHEGIADKLLAKIAKLQRRIKTV) forms a coiled coil. Serine 416 carries the phosphoserine modification. Polar residues-rich tracts occupy residues 418–451 (IEKSSVNYEPSNPSEKGSKKINLSSDQNKSVSES) and 462–490 (ESPNLTTPITSNPTDTRKITSGNSSNSPN). Disordered stretches follow at residues 418 to 491 (IEKS…SPNA) and 513 to 538 (NCNTESPVSPLESHSKAASNSKETTP). Phosphoserine occurs at positions 488 and 521. Residues 528–538 (KAASNSKETTP) show a composition bias toward polar residues. The 106-residue stretch at 575–680 (PPQKPELKVK…IKSIPGFSEN (106 aa)) folds into the Fibronectin type-III domain.

This sequence belongs to the MCAF family. Interacts with MBD1, SETDB1 and SP1. Probably forms a complex with SETDB1 and MBD1.

It localises to the nucleus. Its function is as follows. Recruiter that couples transcriptional factors to general transcription apparatus and thereby modulates transcription regulation and chromatin formation. Can both act as an activator or a repressor depending on the context. Mediates MBD1-dependent transcriptional repression, probably by recruiting complexes containing SETDB1. The complex formed with MBD1 and SETDB1 represses transcription and probably couples DNA methylation and histone H3 'Lys-9' trimethylation (H3K9me3) activity. The protein is Activating transcription factor 7-interacting protein 2 (ATF7IP2) of Homo sapiens (Human).